The following is a 90-amino-acid chain: Small ribosomal subunit protein bS18 (90 aa).

It belongs to the bacterial ribosomal protein bS18 family. As to quaternary structure, part of the 30S ribosomal subunit. Forms a tight heterodimer with protein bS6.

Binds as a heterodimer with protein bS6 to the central domain of the 16S rRNA, where it helps stabilize the platform of the 30S subunit. This chain is Small ribosomal subunit protein bS18, found in Bordetella petrii (strain ATCC BAA-461 / DSM 12804 / CCUG 43448).